We begin with the raw amino-acid sequence, 473 residues long: Bifunctional protein HldE (473 aa).

Positions 1–317 are ribokinase; sequence MKLSMPRFDQ…RRAIQREEGS (317 aa). 194–197 contacts ATP; the sequence is NLSE. D263 is an active-site residue. Positions 343–473 are cytidylyltransferase; sequence FTNGCFDILH…TAIVEKIRKN (131 aa).

The protein in the N-terminal section; belongs to the carbohydrate kinase PfkB family. It in the C-terminal section; belongs to the cytidylyltransferase family. In terms of assembly, homodimer.

It catalyses the reaction D-glycero-beta-D-manno-heptose 7-phosphate + ATP = D-glycero-beta-D-manno-heptose 1,7-bisphosphate + ADP + H(+). The catalysed reaction is D-glycero-beta-D-manno-heptose 1-phosphate + ATP + H(+) = ADP-D-glycero-beta-D-manno-heptose + diphosphate. It participates in nucleotide-sugar biosynthesis; ADP-L-glycero-beta-D-manno-heptose biosynthesis; ADP-L-glycero-beta-D-manno-heptose from D-glycero-beta-D-manno-heptose 7-phosphate: step 1/4. Its pathway is nucleotide-sugar biosynthesis; ADP-L-glycero-beta-D-manno-heptose biosynthesis; ADP-L-glycero-beta-D-manno-heptose from D-glycero-beta-D-manno-heptose 7-phosphate: step 3/4. Its function is as follows. Catalyzes the phosphorylation of D-glycero-D-manno-heptose 7-phosphate at the C-1 position to selectively form D-glycero-beta-D-manno-heptose-1,7-bisphosphate. Catalyzes the ADP transfer from ATP to D-glycero-beta-D-manno-heptose 1-phosphate, yielding ADP-D-glycero-beta-D-manno-heptose. In Pseudomonas putida (strain W619), this protein is Bifunctional protein HldE.